A 160-amino-acid chain; its full sequence is Ureidoglycolate lyase (160 aa).

It belongs to the ureidoglycolate lyase family. Homodimer. Requires Ni(2+) as cofactor.

It carries out the reaction (S)-ureidoglycolate = urea + glyoxylate. The protein operates within nitrogen metabolism; (S)-allantoin degradation. Catalyzes the catabolism of the allantoin degradation intermediate (S)-ureidoglycolate, generating urea and glyoxylate. Involved in the utilization of allantoin as nitrogen source. The protein is Ureidoglycolate lyase of Salmonella agona (strain SL483).